We begin with the raw amino-acid sequence, 1544 residues long: Zinc finger protein GLI2 (1544 aa).

The interval 1–26 (METSAPAPALEKKEAKSGLLEDSSFP) is disordered. Phosphoserine is present on residues S145, S230, S232, and S238. The tract at residues 338–364 (SSSSSNCLNDANQNKQNSESAVSSTVN) is disordered. S385 carries the post-translational modification Phosphoserine; by DYRK2. Residues 417-444 (TNCHWADCTKEYDTQEQLVHHINNEHIH) form a C2H2-type 1 zinc finger. The C2H2-type 2; degenerate zinc-finger motif lies at 455 to 477 (QACTREQKPFKAQYMLVVHMRRH). C2H2-type zinc fingers lie at residues 483-507 (HKCT…LRSH), 513-538 (YVCE…NRTH), and 544-569 (YICK…KTVH). Disordered stretches follow at residues 557 to 619 (DPSS…TSHT) and 635 to 682 (GLCQ…ALAD). Residues 569 to 585 (HGPDAHVTKKQRNDVHV) show a composition bias toward basic and acidic residues. Residues 637-657 (CQSSPGAQSSCSSEPSPLGSA) show a composition bias toward low complexity. Position 707 is a phosphoserine (S707). A Phosphothreonine modification is found at T708. The residue at position 740 (K740) is an N6-acetyllysine; by EP300. Disordered stretches follow at residues 781–800 (SQLQ…AYTV), 805–861 (SGIS…PGLL), 908–963 (ALPG…RRPD), 995–1016 (VQSH…RPPS), 1166–1220 (FGQY…CLGM), and 1422–1457 (GGCP…VSST). Polar residues-rich tracts occupy residues 790–800 (STSTMSSAYTV) and 805–814 (SGISPYFSSR). A compositionally biased stretch (basic and acidic residues) spans 954-963 (RASDPVRRPD). S997 bears the Phosphoserine; by DYRK2 mark. Polar residues-rich tracts occupy residues 997–1009 (SHPS…TRNA), 1173–1190 (NPQS…TQPH), and 1200–1209 (SRGSYTQQPR).

The protein belongs to the GLI C2H2-type zinc-finger protein family. Interacts with ZIC1 and ZIC2. Interacts with STK36. Interacts with SUFU; this inhibits transcriptional activation mediated by GLI2. Interacts (via C-terminal internal region) with FOXC1 (via N-terminus); this interaction is direct and increases GLI2 DNA-binding and transcriptional activity through a smoothened (SMO)-independent Hedgehog (Hh) signaling pathway. Post-translationally, phosphorylated in vitro by ULK3. Phosphorylated by DYRK2; this inhibits GLI2 transcription factor activity and promotes proteasomal degradation of GLI2. In terms of processing, acetylation at Lys-740 inhibits Hh target gene expression, probably by impeding entry into chromatin thus preventing promoter occupancy.

Its subcellular location is the nucleus. It is found in the cytoplasm. It localises to the cell projection. The protein resides in the cilium. In terms of biological role, functions as a transcription regulator in the hedgehog (Hh) pathway. Functions as a transcriptional activator. May also function as transcriptional repressor. Requires STK36 for full transcriptional activator activity. Binds to the DNA sequence 5'-GAACCACCCA-3' which is part of the TRE-2S regulatory element. Is involved in the smoothened (SHH) signaling pathway. Required for normal skeleton development. In Mus musculus (Mouse), this protein is Zinc finger protein GLI2.